The following is a 116-amino-acid chain: uncharacterized protein (116 aa).

Residues 20-42 (YLNKYYSVITYFLAFLTKFAILL) traverse the membrane as a helical segment. The segment at 95 to 116 (IEFQSKSSPVPPASESNKGINE) is disordered.

The protein resides in the membrane. This is an uncharacterized protein from Saccharomyces cerevisiae (strain ATCC 204508 / S288c) (Baker's yeast).